The chain runs to 396 residues: Obg-like ATPase 1 (396 aa).

The 261-residue stretch at Leu23–Leu283 folds into the OBG-type G domain. Asn32 to Thr37 provides a ligand contact to ATP. Positions 36 and 56 each coordinate Mg(2+). Position 231 (Leu231) interacts with ATP. The short motif at Leu267–Leu274 is the Nuclear export signal element. At Lys294 the chain carries N6-acetyllysine. A TGS domain is found at Gln304–Phe387.

This sequence belongs to the TRAFAC class OBG-HflX-like GTPase superfamily. OBG GTPase family. YchF/OLA1 subfamily. In terms of assembly, monomer. Mg(2+) is required as a cofactor. As to expression, expressed in all tissues tested but its expression is more abundant in testis, liver, lung, and brain. Overexpressed in several malignancies, including cancers of the colon, rectum, ovary, lung, stomach, and uterus.

The protein resides in the cytoplasm. The protein localises to the nucleus. It localises to the nucleolus. Its function is as follows. Hydrolyzes ATP, and can also hydrolyze GTP with lower efficiency. Has lower affinity for GTP. The sequence is that of Obg-like ATPase 1 from Homo sapiens (Human).